The sequence spans 516 residues: MRFLLLNRFTLLLLLLVSPTPVLQAPTNLTDSGLDQEPFLYLVGRKKLLDAQYKCYDRIQQLPPYEGEGPYCNRTWDGWMCWDDTPAGVMSYQHCPDYFPDFDPTEKVSKYCDENGEWFRHPDSNRTWSNYTLCNAFTPDKLHNAYVLYYLALVGHSMSIAALIASMGIFLFFKNLSCQRVTLHKNMFLTYILNSIIIIIHLVEVVPNGDLVRRDPMHIFHHNTYMWTMQWELSPPLPLSAHEGKMDPHDSEVISCKILHFFHQYMMACNYFWMLCEGIYLHTLIVMAVFTEDQRLRWYYLLGWGFPIVPTIIHAITRAVYYNDNCWLSTETHLLYIIHGPVMAALVVNFFFLLNIVRVLVTKMRQTHEAEAYMYLKAVKATMVLVPLLGIQFVVFPWRPSNKVLGKIYDYLMHSLIHFQGFFVATIYCFCNHEVQVTLKRQWAQFKIQWSHRWGRRRRPTNRVVSAPRAVAFAEPGGLPIYICHQEPRNPPVSNNEGEEGTEMIPMNVIQQDSSA.

The signal sequence occupies residues 1-24 (MRFLLLNRFTLLLLLLVSPTPVLQ). Over 25 to 146 (APTNLTDSGL…FTPDKLHNAY (122 aa)) the chain is Extracellular. N-linked (GlcNAc...) asparagine glycans are attached at residues N28, N73, N125, and N130. 3 disulfide bridges follow: C55–C81, C72–C112, and C95–C134. Residues 147–169 (VLYYLALVGHSMSIAALIASMGI) form a helical membrane-spanning segment. Topologically, residues 170–181 (FLFFKNLSCQRV) are cytoplasmic. A helical membrane pass occupies residues 182–202 (TLHKNMFLTYILNSIIIIIHL). The Extracellular segment spans residues 203–256 (VEVVPNGDLVRRDPMHIFHHNTYMWTMQWELSPPLPLSAHEGKMDPHDSEVISC). A disulfide bond links C256 and C326. The chain crosses the membrane as a helical span at residues 257–279 (KILHFFHQYMMACNYFWMLCEGI). Residues 280-296 (YLHTLIVMAVFTEDQRL) are Cytoplasmic-facing. The helical transmembrane segment at 297 to 317 (RWYYLLGWGFPIVPTIIHAIT) threads the bilayer. Over 318–333 (RAVYYNDNCWLSTETH) the chain is Extracellular. A helical transmembrane segment spans residues 334–357 (LLYIIHGPVMAALVVNFFFLLNIV). The Cytoplasmic portion of the chain corresponds to 358–377 (RVLVTKMRQTHEAEAYMYLK). A helical transmembrane segment spans residues 378 to 396 (AVKATMVLVPLLGIQFVVF). Residues 397 to 404 (PWRPSNKV) are Extracellular-facing. The chain crosses the membrane as a helical span at residues 405–431 (LGKIYDYLMHSLIHFQGFFVATIYCFC). Over 432-516 (NHEVQVTLKR…MNVIQQDSSA (85 aa)) the chain is Cytoplasmic. The segment at 489–516 (RNPPVSNNEGEEGTEMIPMNVIQQDSSA) is disordered.

Belongs to the G-protein coupled receptor 2 family. As to quaternary structure, heterodimer of CALCR and RAMP1, RAMP2 or RAMP3; the receptor complexes function as AMYR1, AMYR2 and AMYR3 receptors, respectively, and respond to amylin/IAPP, calcitonin/CT and CGRP1 ligands. Interacts with GPRASP2.

It is found in the cell membrane. In terms of biological role, g protein-coupled receptor activated by ligand peptides amylin (IAPP), calcitonin (CT/CALCA) and calcitonin gene-related peptide type 1 (CGRP1/CALCA). CALCR interacts with receptor-activity-modifying proteins RAMP1, 2 and 3 to form receptor complexes AMYR1, 2 and 3, respectively. IAPP, CT and CGRP1 activate CALCR and AMYRs with distinct modes of receptor activation resulting in specific phenotypes. Ligand binding causes a conformation change that triggers signaling via guanine nucleotide-binding proteins (G proteins) and modulates the activity of downstream effectors. Activates cAMP-dependent pathway. This chain is Calcitonin receptor, found in Rattus norvegicus (Rat).